The primary structure comprises 621 residues: tRNA uridine 5-carboxymethylaminomethyl modification enzyme MnmG (621 aa).

11 to 16 contributes to the FAD binding site; the sequence is GGGHAG. Residue 270–284 coordinates NAD(+); that stretch reads GPRYCPSIEDKINRF.

Belongs to the MnmG family. In terms of assembly, homodimer. Heterotetramer of two MnmE and two MnmG subunits. FAD is required as a cofactor.

It is found in the cytoplasm. Its function is as follows. NAD-binding protein involved in the addition of a carboxymethylaminomethyl (cmnm) group at the wobble position (U34) of certain tRNAs, forming tRNA-cmnm(5)s(2)U34. The protein is tRNA uridine 5-carboxymethylaminomethyl modification enzyme MnmG of Helicobacter pylori (strain Shi470).